Here is a 434-residue protein sequence, read N- to C-terminus: Maltoporin (434 aa).

An N-terminal signal peptide occupies residues 1-25 (MMTTLRKLPLALAIAAGVLTTQAMA).

It belongs to the porin LamB (TC 1.B.3) family. Homotrimer formed of three 18-stranded antiparallel beta-barrels, containing three independent channels.

It is found in the cell outer membrane. It carries out the reaction beta-maltose(in) = beta-maltose(out). Functionally, involved in the transport of maltose and maltodextrins. This is Maltoporin from Serratia proteamaculans (strain 568).